Reading from the N-terminus, the 530-residue chain is Cytochrome P450 2U1 (530 aa).

Transmembrane regions (helical) follow at residues 21–41 (LQAVGGALLLCGLAVLLDWVW), 99–119 (VYGNIFSFFIGHRLVVVLSDF), 247–267 (ICLHSQLFLINLCPWFYYLPF), and 328–348 (LFYIIGDLFIAGTDTTTNSLL). Position 476 (Cys476) interacts with heme. The chain crosses the membrane as a helical span at residues 481–501 (LAKMELFLMFVSLMQSFTFAL).

The protein belongs to the cytochrome P450 family. Heme is required as a cofactor. In terms of tissue distribution, specifically expressed in thymus and brain. In brain, expressed in cortex, cerebellum, olfactory bulbs, pons and medulla and the limbic structures (at protein level).

The protein localises to the endoplasmic reticulum membrane. It localises to the microsome membrane. The protein resides in the mitochondrion inner membrane. The enzyme catalyses an omega-methyl-long-chain fatty acid + reduced [NADPH--hemoprotein reductase] + O2 = an omega-hydroxy-long-chain fatty acid + oxidized [NADPH--hemoprotein reductase] + H2O + H(+). It carries out the reaction (5Z,8Z,11Z,14Z)-eicosatetraenoate + reduced [NADPH--hemoprotein reductase] + O2 = 19-hydroxy-(5Z,8Z,11Z,14Z)-eicosatetraenoate + oxidized [NADPH--hemoprotein reductase] + H2O + H(+). The catalysed reaction is (5Z,8Z,11Z,14Z)-eicosatetraenoate + reduced [NADPH--hemoprotein reductase] + O2 = 20-hydroxy-(5Z,8Z,11Z,14Z)-eicosatetraenoate + oxidized [NADPH--hemoprotein reductase] + H2O + H(+). It catalyses the reaction N-[(5Z,8Z,11Z,14Z)-eicosatetraenoyl]-serotonin + reduced [NADPH--hemoprotein reductase] + O2 = 2-oxo-N-[(5Z,8Z,11Z,14Z)-eicosatetraenoyl]-serotonin + oxidized [NADPH--hemoprotein reductase] + H2O + H(+). In terms of biological role, a cytochrome P450 monooxygenase involved in the metabolism of arachidonic acid and its conjugates. Mechanistically, uses molecular oxygen inserting one oxygen atom into a substrate, and reducing the second into a water molecule, with two electrons provided by NADPH via cytochrome P450 reductase (CPR; NADPH-ferrihemoprotein reductase). Acts as an omega and omega-1 hydroxylase for arachidonic acid and possibly for other long chain fatty acids. May modulate the arachidonic acid signaling pathway and play a role in other fatty acid signaling processes. May down-regulate the biological activities of N-arachidonoyl-serotonin, an endocannabinoid that has anti-nociceptive effects through inhibition of fatty acid amide hydrolase FAAH, TRPV1 receptor and T-type calcium channels. Catalyzes C-2 oxidation of the indole ring of N-arachidonoyl-serotonin forming a less active product 2-oxo-N-arachidonoyl-serotonin. The chain is Cytochrome P450 2U1 (Cyp2u1) from Rattus norvegicus (Rat).